The primary structure comprises 375 residues: Major DNA-binding protein (375 aa).

The protein belongs to the herpesviridae DNA-binding protein family.

The protein resides in the host nucleus. Functionally, single-stranded DNA-binding protein required for DNA replication. The chain is Major DNA-binding protein from Equine herpesvirus 1 (strain HVS25A) (EHV-1).